The primary structure comprises 513 residues: Activin receptor type-2A (513 aa).

Residues 1-19 (MGAAAKLAFAVFLISCSSG) form the signal peptide. Topologically, residues 20 to 135 (AILGRSETQE…TSNPVTPKPP (116 aa)) are extracellular. 5 cysteine pairs are disulfide-bonded: cysteine 30–cysteine 60, cysteine 50–cysteine 78, cysteine 85–cysteine 104, cysteine 91–cysteine 103, and cysteine 105–cysteine 110. N-linked (GlcNAc...) asparagine glycans are attached at residues asparagine 43 and asparagine 66. The chain crosses the membrane as a helical span at residues 136 to 161 (YYNILLYSLVPLMLVAGIVICAFWVY). Residues 162-513 (RHHKMAYPPV…VDFPPKESSL (352 aa)) lie on the Cytoplasmic side of the membrane. The Protein kinase domain occupies 192 to 485 (LQLLEVKARG…GERITQMQRL (294 aa)). ATP contacts are provided by residues 198 to 206 (KARGGFGCV) and lysine 219. Aspartate 322 serves as the catalytic Proton acceptor.

This sequence belongs to the protein kinase superfamily. TKL Ser/Thr protein kinase family. TGFB receptor subfamily. Part of a complex consisting of MAGI2/ARIP1, ACVR2A, ACVR1B and SMAD3. Interacts with MAGI2/ARIP1. Interacts with type I receptor ACVR1. Interacts with TSC22D1/TSC-22. Interacts with activin A/INHBA. Mg(2+) serves as cofactor. It depends on Mn(2+) as a cofactor.

The protein localises to the cell membrane. It catalyses the reaction L-threonyl-[receptor-protein] + ATP = O-phospho-L-threonyl-[receptor-protein] + ADP + H(+). It carries out the reaction L-seryl-[receptor-protein] + ATP = O-phospho-L-seryl-[receptor-protein] + ADP + H(+). Functionally, on ligand binding, forms a receptor complex consisting of two type II and two type I transmembrane serine/threonine kinases. Type II receptors phosphorylate and activate type I receptors which autophosphorylate, then bind and activate SMAD transcriptional regulators. Receptor for activin A, activin B and inhibin A. Mediates induction of adipogenesis by GDF6. This is Activin receptor type-2A (ACVR2A) from Ovis aries (Sheep).